A 614-amino-acid polypeptide reads, in one-letter code: Deoxynucleoside triphosphate triphosphohydrolase SAMHD1 (614 aa).

Residues 1–13 (MGSPAAGWGAAPA) are compositionally biased toward low complexity. Positions 1 to 33 (MGSPAAGWGAAPAKRARREGSAESSCGSPADRD) are disordered. The SAM domain maps to 37 to 102 (WDTERLCQHL…LACLNQLRQT (66 aa)). Residues Lys107 and Val108 each contribute to the GTP site. Asn110 is a dGTP binding site. GTP contacts are provided by Asp128, Gln133, and Arg136. Gln140, Leu141, Val147, and Arg155 together coordinate dGTP. A dATP-binding site is contributed by Gln140. Gln140 provides a ligand contact to dCTP. Gln140 contacts dTTP. Position 155 (Arg155) interacts with dATP. Position 155 (Arg155) interacts with dCTP. Residue Arg155 coordinates dTTP. The HD domain occupies 155–307 (RFEHSLGVGY…GIDVDKWDYF (153 aa)). The Mn(2+) site is built by His158, His197, and Asp198. DATP-binding residues include His201 and His206. DCTP contacts are provided by His201 and His206. DTTP is bound by residues His201 and His206. The active site involves His224. Residue Asp302 coordinates Mn(2+). DGTP contacts are provided by Lys303, Tyr306, Asp310, Arg324, Arg343, Lys345, Asn349, Arg357, Tyr365, Gln366, His367, and Lys368. Residues Lys303, Tyr306, and Asp310 each coordinate dATP. The dCTP site is built by Lys303, Tyr306, and Asp310. DTTP-binding residues include Lys303, Tyr306, and Asp310. Arg357 is a binding site for dATP. Residue Arg357 coordinates dCTP. Gln366 is a binding site for dATP. Residue Gln366 coordinates dCTP. A dTTP-binding site is contributed by Gln366. Arg442, Lys446, and Lys515 together coordinate GTP. Lys515 contacts dGTP.

Belongs to the SAMHD1 family. Homodimer; in absence of GTP and dNTP. Homotetramer; in GTP- and dNTP-bound form. Interacts with rbbp8/CtIP. Requires Zn(2+) as cofactor.

Its subcellular location is the nucleus. The protein resides in the chromosome. It carries out the reaction a 2'-deoxyribonucleoside 5'-triphosphate + H2O = a 2'-deoxyribonucleoside + triphosphate + H(+). The catalysed reaction is dATP + H2O = 2'-deoxyadenosine + triphosphate + H(+). The enzyme catalyses dCTP + H2O = 2'-deoxycytidine + triphosphate + H(+). It catalyses the reaction dGTP + H2O = 2'-deoxyguanosine + triphosphate + H(+). It carries out the reaction dTTP + H2O = thymidine + triphosphate + H(+). Allosterically activated and regulated via the combined actions of GTP and dNTPs (dATP, dGTP, dTTP and dCTP): Allosteric site 1 binds GTP, while allosteric site 2 binds dNTP. Allosteric activation promotes the formation of highly active homotetramers. Protein that acts both as a host restriction factor involved in defense response to virus and as a regulator of DNA end resection at stalled replication forks. Has deoxynucleoside triphosphate (dNTPase) activity, which is required to restrict infection by viruses: dNTPase activity reduces cellular dNTP levels to levels too low for retroviral reverse transcription to occur, blocking early-stage virus replication in dendritic and other myeloid cells. Functions during S phase at stalled DNA replication forks to promote the resection of gapped or reversed forks: acts by stimulating the exonuclease activity of MRE11, activating the ATR-CHK1 pathway and allowing the forks to restart replication. Its ability to promote degradation of nascent DNA at stalled replication forks is required to prevent induction of type I interferons, thereby preventing chronic inflammation. Ability to promote DNA end resection at stalled replication forks is independent of dNTPase activity. This chain is Deoxynucleoside triphosphate triphosphohydrolase SAMHD1, found in Gallus gallus (Chicken).